We begin with the raw amino-acid sequence, 346 residues long: 26S proteasome non-ATPase regulatory subunit 4 (346 aa).

In terms of domain architecture, VWFA spans 5-190 (STMICVDNSE…LTDALLQSSV (186 aa)). UIM domains follow at residues 216–235 (ENDPDLALALRVSMEEERAR) and 273–292 (TEEQQLEWALRLSMQENAPA). A disordered region spans residues 290–346 (APAEQPQVQHEQMDVDGAPAVGGDNLDDLMNNPELLQQIVDDLPAANAEKDDDKEKK). Over residues 337 to 346 (AEKDDDKEKK) the composition is skewed to basic and acidic residues.

It belongs to the proteasome subunit S5A family. In terms of assembly, the 26S proteasome is composed of a core protease, known as the 20S proteasome, capped at one or both ends by the 19S regulatory complex (RC). The RC is composed of at least 18 different subunits in two subcomplexes, the base and the lid, which form the portions proximal and distal to the 20S proteolytic core, respectively. As to expression, broadly expressed with high expression in the pharynx, intestine, hypodermis and spermatheca and weak expression in the excretory cell, body wall muscle, vulva and somatic gonad.

The protein localises to the cytoplasm. The protein resides in the nucleus. Binds and presumably selects ubiquitin-conjugates for destruction. Required for protein degradation and ubiquitin-proteasome system (UBS) function and regulates proteasomal subunit expression. Involvement in UBS might be cell type specific. Regulator of the autophagy-lysosome pathway that may confer resistance to autophagy by regulating the expression of autophagy-related proteins such as lgg-1, and by regulating lysosome formation, possibly by modulating elt-2 activity. Required for fertility, sperm production, and sex determination through regulation of tra-2 protein. Plays a role in the elimination of paternal mitochondria in fertilized eggs. The protein is 26S proteasome non-ATPase regulatory subunit 4 of Caenorhabditis elegans.